The following is a 191-amino-acid chain: Adenylate kinase (191 aa).

12 to 17 (GSGKTT) is a binding site for ATP. The NMP stretch occupies residues 33-62 (STGDLLRAEVASGSELGKLIDSFISKGNLV). Residues Thr34, Arg39, 60–62 (NLV), 87–90 (GYPR), and Gln94 contribute to the AMP site. The tract at residues 129 to 135 (GRARGAD) is LID. Arg130 contributes to the ATP binding site. The AMP site is built by Arg132 and Arg144. Arg172 is a binding site for ATP.

It belongs to the adenylate kinase family. In terms of assembly, monomer.

The protein resides in the cytoplasm. The enzyme catalyses AMP + ATP = 2 ADP. The protein operates within purine metabolism; AMP biosynthesis via salvage pathway; AMP from ADP: step 1/1. Its function is as follows. Catalyzes the reversible transfer of the terminal phosphate group between ATP and AMP. Plays an important role in cellular energy homeostasis and in adenine nucleotide metabolism. The polypeptide is Adenylate kinase (Campylobacter fetus subsp. fetus (strain 82-40)).